The primary structure comprises 417 residues: Transcobalamin-1 (417 aa).

Residues 1 to 25 (MRQSHQLPLVGLLLFSLIPSQLCQS) form the signal peptide. The globular N-terminal alpha domain stretch occupies residues 24 to 308 (QSCVVSEKDY…DVTKLLLVPK (285 aa)). The N-linked (GlcNAc...) asparagine glycan is linked to asparagine 90. 143-147 (TNYYQ) is a binding site for cyanocob(III)alamin. The cysteines at positions 156 and 198 are disulfide-linked. N-linked (GlcNAc...) asparagine glycans are attached at residues asparagine 161, asparagine 166, and asparagine 179. Positions 187 and 287 each coordinate cyanocob(III)alamin. Residues 309–327 (VQVNITDEPVPVVPTLSPE) form a flexible linker region. N-linked (GlcNAc...) asparagine glycans are attached at residues asparagine 312, asparagine 328, asparagine 345, and asparagine 360. The interval 328 to 417 (NISVIYCVKI…GIMLSKMESI (90 aa)) is globular C-terminal beta domain. Residues 376–377 (YI) and 393–395 (WEH) contribute to the cyanocob(III)alamin site.

The protein belongs to the eukaryotic cobalamin transport proteins family. Contains about 30% carbohydrates. As to expression, haptocorrins are a family of cobalamin-binding glycoproteins found in blood, salivary and mucosal secretions.

It is found in the secreted. Its function is as follows. Binds vitamin B12 with femtomolar affinity and protects it from the acidic environment of the stomach. Binds to cobalamin and to cobalamin analogs such as cobinamide. This Sus scrofa (Pig) protein is Transcobalamin-1 (TCN1).